The chain runs to 432 residues: Alkaline protease secretion protein AprE (432 aa).

The Cytoplasmic portion of the chain corresponds to 1–14; the sequence is MTRTVKRDENAYAR. Residues 15 to 36 form a helical membrane-spanning segment; it reads LGWLLVLFGFGGALLWAAFAPL. Residues 37-432 lie on the Periplasmic side of the membrane; it reads DQGVAVPATV…DRAHVALAEN (396 aa).

Belongs to the membrane fusion protein (MFP) (TC 8.A.1) family.

The protein localises to the cell inner membrane. Involved in the secretion of alkaline protease. This chain is Alkaline protease secretion protein AprE (aprE), found in Pseudomonas aeruginosa (strain ATCC 15692 / DSM 22644 / CIP 104116 / JCM 14847 / LMG 12228 / 1C / PRS 101 / PAO1).